The primary structure comprises 211 residues: Ubiquitin-conjugating enzyme E2 S-C (211 aa).

The UBC core domain occupies 11–157; it reads HIIRRVYKEV…AKLMTEIHAQ (147 aa). Residue C95 is the Glycyl thioester intermediate of the active site. The interval 158–211 is disordered; it reads GSTLRGKDPTDPCSSASATVVSGDGPMAKKHAGDRDKKLAAKKKTDKKRALRRL. Positions 197 to 211 are enriched in basic residues; it reads AAKKKTDKKRALRRL.

The protein belongs to the ubiquitin-conjugating enzyme family.

The enzyme catalyses S-ubiquitinyl-[E1 ubiquitin-activating enzyme]-L-cysteine + [E2 ubiquitin-conjugating enzyme]-L-cysteine = [E1 ubiquitin-activating enzyme]-L-cysteine + S-ubiquitinyl-[E2 ubiquitin-conjugating enzyme]-L-cysteine.. Its pathway is protein modification; protein ubiquitination. Functionally, catalyzes the covalent attachment of ubiquitin to other proteins. Acts as an essential factor of the anaphase promoting complex/cyclosome (APC/C), a cell cycle-regulated ubiquitin ligase that controls progression through mitosis. Acts by specifically elongating 'Lys-11'-linked polyubiquitin chains initiated by the E2 enzyme ube2c/ubch10 on APC/C substrates, enhancing the degradation of APC/C substrates by the proteasome and promoting mitotic exit. This Xenopus laevis (African clawed frog) protein is Ubiquitin-conjugating enzyme E2 S-C (ube2s-c).